Reading from the N-terminus, the 621-residue chain is Alpha-actinin-like protein 1 (621 aa).

2 Calponin-homology (CH) domains span residues Ser8 to Thr114 and Leu123 to Ser230. Positions Leu86–Ile110 are actin-binding. 3 consecutive EF-hand domains span residues Leu388–Leu419, Asp487–Met549, and Glu550–Lys618.

Belongs to the alpha-actinin family.

The protein localises to the cytoplasm. The protein resides in the cytoskeleton. Functionally, binds to actin and is involved in actin-ring formation and organization. Plays a role in cytokinesis and is involved in septation. The protein is Alpha-actinin-like protein 1 (ain1) of Schizosaccharomyces pombe (strain 972 / ATCC 24843) (Fission yeast).